A 307-amino-acid chain; its full sequence is UDP-3-O-acyl-N-acetylglucosamine deacetylase (307 aa).

3 residues coordinate Zn(2+): His78, His235, and Asp239. His262 acts as the Proton donor in catalysis.

It belongs to the LpxC family. Zn(2+) is required as a cofactor.

The catalysed reaction is a UDP-3-O-[(3R)-3-hydroxyacyl]-N-acetyl-alpha-D-glucosamine + H2O = a UDP-3-O-[(3R)-3-hydroxyacyl]-alpha-D-glucosamine + acetate. It participates in glycolipid biosynthesis; lipid IV(A) biosynthesis; lipid IV(A) from (3R)-3-hydroxytetradecanoyl-[acyl-carrier-protein] and UDP-N-acetyl-alpha-D-glucosamine: step 2/6. Functionally, catalyzes the hydrolysis of UDP-3-O-myristoyl-N-acetylglucosamine to form UDP-3-O-myristoylglucosamine and acetate, the committed step in lipid A biosynthesis. The protein is UDP-3-O-acyl-N-acetylglucosamine deacetylase of Geotalea uraniireducens (strain Rf4) (Geobacter uraniireducens).